A 100-amino-acid chain; its full sequence is Urease subunit gamma (100 aa).

Belongs to the urease gamma subunit family. In terms of assembly, heterotrimer of UreA (gamma), UreB (beta) and UreC (alpha) subunits. Three heterotrimers associate to form the active enzyme.

Its subcellular location is the cytoplasm. The catalysed reaction is urea + 2 H2O + H(+) = hydrogencarbonate + 2 NH4(+). Its pathway is nitrogen metabolism; urea degradation; CO(2) and NH(3) from urea (urease route): step 1/1. This is Urease subunit gamma from Mycolicibacterium gilvum (strain PYR-GCK) (Mycobacterium gilvum (strain PYR-GCK)).